The chain runs to 2063 residues: Rho guanine nucleotide exchange factor 17 (2063 aa).

Disordered stretches follow at residues Trp22–Ser365, Tyr380–Asp466, Leu485–Asp581, and Ile602–Arg958. Low complexity predominate over residues Pro65–Arg76. A compositionally biased stretch (basic and acidic residues) spans Arg87–Asp96. The segment covering Pro108–Ala122 has biased composition (low complexity). Phosphoserine occurs at positions 142 and 152. Residues Ala225–Ser250 show a composition bias toward low complexity. Ser310 carries the post-translational modification Phosphoserine. Residues Leu313–Val323 show a composition bias toward polar residues. 7 positions are modified to phosphoserine: Ser326, Ser332, Ser383, Ser387, Ser395, Ser410, and Ser420. Over residues Arg388–Glu397 the composition is skewed to polar residues. The span at Ala445–Ser456 shows a compositional bias: basic and acidic residues. Residues Ser461 and Ser546 each carry the phosphoserine modification. A compositionally biased stretch (low complexity) spans Ser562 to Leu573. Phosphoserine is present on Ser619. The segment covering Leu671–His680 has biased composition (polar residues). Ser696 carries the post-translational modification Phosphoserine. Thr699 and Thr702 each carry phosphothreonine. Residue Ser735 is modified to Phosphoserine. Over residues Ser754–Pro765 the composition is skewed to polar residues. The segment covering Ser827–Glu836 has biased composition (basic and acidic residues). Ser914 carries the post-translational modification Phosphoserine. The segment covering Leu917–Arg928 has biased composition (basic residues). Residues Ser930–Gly939 show a composition bias toward basic and acidic residues. 2 positions are modified to phosphoserine: Ser961 and Ser1002. Positions Ala1034–Ser1060 are disordered. Positions Lys1041–Asp1050 are enriched in basic and acidic residues. The 189-residue stretch at Met1066–Gly1254 folds into the DH domain. Phosphoserine is present on Ser1331. Disordered stretches follow at residues His1564–Pro1584, Gly1616–Gly1719, Thr1991–Ala2020, and Phe2036–Thr2055. Positions Pro1568 to Ala1582 are enriched in pro residues. Positions Ser1644–Thr1680 are enriched in low complexity. Residues Pro2004–Trp2013 show a composition bias toward basic and acidic residues.

In terms of tissue distribution, highly expressed in the heart.

Acts as a guanine nucleotide exchange factor (GEF) for RhoA GTPases. This chain is Rho guanine nucleotide exchange factor 17 (ARHGEF17), found in Homo sapiens (Human).